Consider the following 97-residue polypeptide: MFQKQERIGLVVYLYYNRDARKLSKFGDLYYHSKRSRYLIIYINKNDLDTKLEEMRRLKCVKDIRPSAFDDIDRQFVGNLHRDETNNHQKGYQPPSY.

This sequence belongs to the UPF0298 family.

The protein resides in the cytoplasm. The chain is UPF0298 protein MGAS9429_Spy0329 from Streptococcus pyogenes serotype M12 (strain MGAS9429).